The sequence spans 71 residues: Sperm-associated antigen 11A (71 aa).

Residues 1–19 (MIPRLLPFFASLLFAALLF) form the signal peptide. Cystine bridges form between Cys32–Cys61, Cys39–Cys54, and Cys44–Cys62.

Belongs to the beta-defensin family.

Its subcellular location is the secreted. Its function is as follows. Has antimicrobial activity against E.coli. Plays a role in the defense response in the male reproductive tract, contributing to sperm maturation, storage and protection. The protein is Sperm-associated antigen 11A of Mus musculus (Mouse).